Here is a 1802-residue protein sequence, read N- to C-terminus: U3 small nucleolar RNA-associated protein 10 (1802 aa).

An HEAT 1 repeat occupies 581 to 618 (MDLQALLPFVLVTLADPSERVRREAAGILTIIGSLHKN). 2 helical membrane-spanning segments follow: residues 946 to 966 (VQSG…AIVN) and 1002 to 1022 (ALLL…HSVM). 4 HEAT repeats span residues 1046–1083 (QTID…AFEH), 1253–1290 (LSLV…QNPE), 1297–1335 (TRML…KYGK), and 1758–1795 (ALLP…VLGE).

It belongs to the HEATR1/UTP10 family. Component of the ribosomal small subunit (SSU) processome.

It is found in the nucleus. Its subcellular location is the nucleolus. The protein localises to the membrane. Involved in nucleolar processing of pre-18S ribosomal RNA. Involved in ribosome biosynthesis. This is U3 small nucleolar RNA-associated protein 10 from Aspergillus oryzae (strain ATCC 42149 / RIB 40) (Yellow koji mold).